A 241-amino-acid polypeptide reads, in one-letter code: Interleukin-6 (241 aa).

Positions Met1 to Pro25 are disordered. An N-terminal signal peptide occupies residues Met1–Ala46. Cys122 and Cys132 form a disulfide bridge.

The protein belongs to the IL-6 superfamily. As to quaternary structure, component of a hexamer of two molecules each of IL6, IL6R and IL6ST; first binds to IL6R to associate with the signaling subunit IL6ST.

The protein localises to the secreted. Its function is as follows. Cytokine with a wide variety of biological functions in immunity, tissue regeneration, and metabolism. Binds to IL6R, then the complex associates to the signaling subunit IL6ST/gp130 to trigger the intracellular IL6-signaling pathway. The interaction with the membrane-bound IL6R and IL6ST stimulates 'classic signaling', whereas the binding of IL6 and soluble IL6R to IL6ST stimulates 'trans-signaling'. Alternatively, 'cluster signaling' occurs when membrane-bound IL6:IL6R complexes on transmitter cells activate IL6ST receptors on neighboring receiver cells. The polypeptide is Interleukin-6 (IL6) (Gallus gallus (Chicken)).